Reading from the N-terminus, the 506-residue chain is Maturase K (506 aa).

The protein belongs to the intron maturase 2 family. MatK subfamily.

The protein resides in the plastid. The protein localises to the chloroplast. Its function is as follows. Usually encoded in the trnK tRNA gene intron. Probably assists in splicing its own and other chloroplast group II introns. The sequence is that of Maturase K from Gaultheria procumbens (Wintergreen).